A 721-amino-acid polypeptide reads, in one-letter code: Exocyst complex component 3-like protein 4 (721 aa).

2 disordered regions span residues 1-52 (MPLP…SLGM) and 94-135 (GLTA…QAES). The span at 22-37 (SQTLPVTTWKSNSMKE) shows a compositional bias: polar residues. Serine 515 is subject to Phosphoserine.

It belongs to the SEC6 family.

This Mus musculus (Mouse) protein is Exocyst complex component 3-like protein 4 (Exoc3l4).